A 372-amino-acid chain; its full sequence is Maltose/maltodextrin import ATP-binding protein MalK (372 aa).

The region spanning 4 to 234 (VTLKNVCKAY…PQNRFVAGFI (231 aa)) is the ABC transporter domain. 36–43 (GPSGCGKS) provides a ligand contact to ATP.

It belongs to the ABC transporter superfamily. Maltooligosaccharide importer (TC 3.A.1.1.1) family. The complex is composed of two ATP-binding proteins (MalK), two transmembrane proteins (MalG and MalK) and a solute-binding protein (MalE).

Its subcellular location is the cell inner membrane. The enzyme catalyses D-maltose(out) + ATP + H2O = D-maltose(in) + ADP + phosphate + H(+). In terms of biological role, part of the ABC transporter complex MalEFGK involved in maltose/maltodextrin import. Responsible for energy coupling to the transport system. The protein is Maltose/maltodextrin import ATP-binding protein MalK of Vibrio parahaemolyticus serotype O3:K6 (strain RIMD 2210633).